The following is a 190-amino-acid chain: Selenoprotein S (190 aa).

Residues 28–48 (SLLASYGWYILFSCILLYIVI) traverse the membrane as a helical segment. The interval 78–90 (RQEALAAARLRMQ) is VCP/p97-interacting motif (VIM). Residues 115–190 (KIEMWDSMQE…RRGPSSGGUN (76 aa)) are disordered. The span at 160–174 (RGGGYNPLTGEGGGT) shows a compositional bias: gly residues. Position 189 (Sec-189) is a non-standard amino acid, selenocysteine.

Belongs to the selenoprotein S family. In terms of assembly, interacts with DERL1 and (via VIM motif) with VCP, suggesting that it forms a membrane complex with DERL1 that serves as a receptor for VCP. Also interacts with DERL2, DERL3 and SELENOK. The SELENOK-SELENOS complex interacts with VCP. Interacts with CCDC47. In terms of processing, truncated SELENOS proteins produced by failed UGA/Sec decoding are ubiquitinated by the CRL2(KLHDC2) and CRL2(KLHDC3) complexes, which recognizes the glycine (Gly) at the C-terminus of truncated SELENOS proteins. Truncated SELENOS proteins produced by failed UGA/Sec decoding are also ubiquitinated by the CRL5(KLHDC1) complex.

The protein localises to the endoplasmic reticulum membrane. Its subcellular location is the cytoplasm. Functionally, involved in the degradation process of misfolded endoplasmic reticulum (ER) luminal proteins. Participates in the transfer of misfolded proteins from the ER to the cytosol, where they are destroyed by the proteasome in a ubiquitin-dependent manner. Probably acts by serving as a linker between DERL1, which mediates the retrotranslocation of misfolded proteins into the cytosol, and the ATPase complex VCP, which mediates the translocation and ubiquitination. This Mus musculus (Mouse) protein is Selenoprotein S.